A 453-amino-acid chain; its full sequence is Carbamoyl phosphate synthase arginine-specific small chain (453 aa).

The transit peptide at 1–33 (MFSRLAARLPKASALNGVAARQVRNLSQPAITG) directs the protein to the mitochondrion. The segment at 26–50 (LSQPAITGSKGRNMPAREPRTTAAA) is disordered. L-glutamine-binding residues include Ser-97, Gly-280, and Gly-282. Residues 233-420 (HVALIDCGVK…MENVELFKSN (188 aa)) form the Glutamine amidotransferase type-1 domain. Residue Cys-309 is the Nucleophile of the active site. L-glutamine-binding residues include Leu-310, Gln-313, Asn-351, Gly-353, and Tyr-354. Residues His-393 and Glu-395 contribute to the active site.

Belongs to the CarA family. In terms of assembly, heterodimer composed of 2 chains; the small (or glutamine) chain promotes the hydrolysis of glutamine to ammonia, which is used by the large (or ammonia) chain to synthesize carbamoyl phosphate.

The protein localises to the mitochondrion matrix. It catalyses the reaction hydrogencarbonate + L-glutamine + 2 ATP + H2O = carbamoyl phosphate + L-glutamate + 2 ADP + phosphate + 2 H(+). The catalysed reaction is L-glutamine + H2O = L-glutamate + NH4(+). Its pathway is amino-acid biosynthesis; L-arginine biosynthesis; carbamoyl phosphate from bicarbonate: step 1/1. Functionally, small subunit of the arginine-specific carbamoyl phosphate synthase (CPSase). CPSase catalyzes the formation of carbamoyl phosphate from the ammonia moiety of glutamine, carbonate, and phosphate donated by ATP, the first step of the arginine biosynthetic pathway. The small subunit (glutamine amidotransferase) binds and cleaves glutamine to supply the large subunit with the substrate ammonia. This Neurospora crassa (strain ATCC 24698 / 74-OR23-1A / CBS 708.71 / DSM 1257 / FGSC 987) protein is Carbamoyl phosphate synthase arginine-specific small chain (arg-2).